Consider the following 159-residue polypeptide: Probable NADH dehydrogenase [ubiquinone] 1 alpha subcomplex subunit 12 (159 aa).

It belongs to the complex I NDUFA12 subunit family. In terms of assembly, complex I is composed of at least 49 different subunits.

It is found in the mitochondrion inner membrane. Functionally, accessory subunit of the mitochondrial membrane respiratory chain NADH dehydrogenase (Complex I), that is believed not to be involved in catalysis. Complex I functions in the transfer of electrons from NADH to the respiratory chain. The immediate electron acceptor for the enzyme is believed to be ubiquinone. The polypeptide is Probable NADH dehydrogenase [ubiquinone] 1 alpha subcomplex subunit 12 (Arabidopsis thaliana (Mouse-ear cress)).